The primary structure comprises 229 residues: Cytochrome c oxidase assembly factor 7 (229 aa).

Sel1-like repeat units lie at residues 34-66 (PEGCHRLADYLEGVKKNYESTAQVLQHNCEVNA), 68-104 (AQSCYKLGAYHVTGKGGMKKCLKTAYSCFLKSCNTQG), 108-145 (VDACHNVGLLAQDGRALETGPDTTVARQYFEKACEGGF), 146-182 (APSCFNLSTLYIQGFPGLDKSMPLALKYALKACDLGH), and 183-218 (VWGCANASRMYKLGDGTDKDEQRAEELKNRAKDLHG). Positions 197 to 229 (DGTDKDEQRAEELKNRAKDLHGQEKERQLKFGE) are disordered.

It belongs to the hcp beta-lactamase family.

Its subcellular location is the mitochondrion intermembrane space. Its function is as follows. May be required for assembly of mitochondrial respiratory chain complexes. This is Cytochrome c oxidase assembly factor 7 (coa7) from Danio rerio (Zebrafish).